We begin with the raw amino-acid sequence, 451 residues long: Phosphoglucosamine mutase (451 aa).

Serine 101 acts as the Phosphoserine intermediate in catalysis. The Mg(2+) site is built by serine 101, aspartate 240, aspartate 242, and aspartate 244. The residue at position 101 (serine 101) is a Phosphoserine.

It belongs to the phosphohexose mutase family. Requires Mg(2+) as cofactor. Activated by phosphorylation.

It carries out the reaction alpha-D-glucosamine 1-phosphate = D-glucosamine 6-phosphate. Catalyzes the conversion of glucosamine-6-phosphate to glucosamine-1-phosphate. In Streptococcus pyogenes serotype M18 (strain MGAS8232), this protein is Phosphoglucosamine mutase.